A 325-amino-acid chain; its full sequence is Protein SAR DEFICIENT 4 (325 aa).

Residues 1–42 (MAALPVFIPAESFPSILSHETLINHFRTNLPKHSSTITSPVR) constitute a chloroplast transit peptide.

The protein belongs to the ornithine cyclodeaminase/mu-crystallin family.

Its subcellular location is the plastid. The protein localises to the chloroplast. In terms of biological role, involved in the biosynthesis of pipecolate (Pip), a metabolite that orchestrates defense amplification, positive regulation of salicylic acid (SA) biosynthesis, and priming to guarantee effective local resistance induction and the establishment of systemic acquired resistance (SAR). Converts delta-(1)-piperideine-2-carboxylate (P2C) to Pip. Mediates reduction of P2C and biosynthesis of Pip in systemic tissue and contributes to SAR establishment. Does not possess ornithine cyclodeaminase activity in vitro. The chain is Protein SAR DEFICIENT 4 from Arabidopsis thaliana (Mouse-ear cress).